The chain runs to 122 residues: Large ribosomal subunit protein eL34 (122 aa).

This sequence belongs to the eukaryotic ribosomal protein eL34 family. As to quaternary structure, component of the large ribosomal subunit. Mature ribosomes consist of a small (40S) and a large (60S) subunit. The 40S subunit contains about 32 different proteins and 1 molecule of RNA (18S). The 60S subunit contains 45 different proteins and 3 molecules of RNA (25S, 5.8S and 5S).

Its subcellular location is the cytoplasm. Its function is as follows. Component of the ribosome, a large ribonucleoprotein complex responsible for the synthesis of proteins in the cell. The small ribosomal subunit (SSU) binds messenger RNAs (mRNAs) and translates the encoded message by selecting cognate aminoacyl-transfer RNA (tRNA) molecules. The large subunit (LSU) contains the ribosomal catalytic site termed the peptidyl transferase center (PTC), which catalyzes the formation of peptide bonds, thereby polymerizing the amino acids delivered by tRNAs into a polypeptide chain. The nascent polypeptides leave the ribosome through a tunnel in the LSU and interact with protein factors that function in enzymatic processing, targeting, and the membrane insertion of nascent chains at the exit of the ribosomal tunnel. The protein is Large ribosomal subunit protein eL34 of Candida albicans (strain SC5314 / ATCC MYA-2876) (Yeast).